The primary structure comprises 322 residues: Undecaprenyl-phosphate 4-deoxy-4-formamido-L-arabinose transferase (322 aa).

The Cytoplasmic portion of the chain corresponds to 1 to 235 (MFEIHPVKKV…TCLTTTPLRM (235 aa)). The helical transmembrane segment at 236-256 (LSLLGSIIAIGGFSIAVLLVI) threads the bilayer. Residues 257-269 (LRLTFGPQWAAEG) are Periplasmic-facing. The helical transmembrane segment at 270 to 290 (VFMLFAVLFTFIGAQFIGMGL) threads the bilayer. Topologically, residues 291–322 (LGEYIGRIYTDVRARPRYFVQQVIRPSSKENE) are cytoplasmic.

Belongs to the glycosyltransferase 2 family.

It is found in the cell inner membrane. It catalyses the reaction UDP-4-deoxy-4-formamido-beta-L-arabinose + di-trans,octa-cis-undecaprenyl phosphate = 4-deoxy-4-formamido-alpha-L-arabinopyranosyl di-trans,octa-cis-undecaprenyl phosphate + UDP. It participates in glycolipid biosynthesis; 4-amino-4-deoxy-alpha-L-arabinose undecaprenyl phosphate biosynthesis; 4-amino-4-deoxy-alpha-L-arabinose undecaprenyl phosphate from UDP-4-deoxy-4-formamido-beta-L-arabinose and undecaprenyl phosphate: step 1/2. Its pathway is bacterial outer membrane biogenesis; lipopolysaccharide biosynthesis. Functionally, catalyzes the transfer of 4-deoxy-4-formamido-L-arabinose from UDP to undecaprenyl phosphate. The modified arabinose is attached to lipid A and is required for resistance to polymyxin and cationic antimicrobial peptides. The protein is Undecaprenyl-phosphate 4-deoxy-4-formamido-L-arabinose transferase of Shigella flexneri.